The chain runs to 398 residues: Stabilizer of axonemal microtubules 2 (398 aa).

Mn regions lie at residues 114 to 126 (STTF…PQEI), 148 to 162 (ITSH…QLEL), 248 to 260 (NSTS…PYQA), 282 to 296 (KSIM…ESCR), 316 to 328 (LSTF…PHEL), and 350 to 364 (VTMY…RQEI).

This sequence belongs to the FAM154 family.

This Homo sapiens (Human) protein is Stabilizer of axonemal microtubules 2 (SAXO2).